Consider the following 210-residue polypeptide: Fibroblast growth factor 8 (210 aa).

The first 27 residues, 1–27 (MRLIPSRLSYLFLHLFAFCYYAQVTIQ), serve as a signal peptide directing secretion.

This sequence belongs to the heparin-binding growth factors family. As to quaternary structure, monomer. Homodimer.

It is found in the secreted. Its function is as follows. Plays an important role in the regulation of embryonic development, cell proliferation, cell differentiation and cell migration. Required for Kupffer's vesicle ciliogenesis. The protein is Fibroblast growth factor 8 of Danio rerio (Zebrafish).